The sequence spans 488 residues: MSLWFCPLTSTLNRQQPIHFIGVGGIGMSALALILVNRGHIVSGSDSRENTAVEQLRAQGVRVFRDQSAANIDAICSNVDLLPLVVISTAIPKSNPELKAAKLSQLKILHRSDLLAALIQAQPSIAVAGSHGKTTTSTLLTTLLATTDQDPTAVIGGVVPYYDSNGHVGKGRLLVAEADESDGSLVKFQATLGVITNLELDHTDHYANLDELINTMKRFGQGCRRLLANFDCPILKEHFDATAWWSVKTSAGVDFAALPICLNGDQTIADIYEQGKRMGQITLPMPGLHNLSNAMAAIAACRLEGLSFEDVQQGLADLQPPGRRFDFRGTWEGRQIVDDYAHHPSEVSATLTMARLIVTSGRSQLPNPPKRILAVFQPHRYSRTNKFLYDFARALGEADAVLLAPVYSAGENPIQGATSESLAKAIRIQHPNLPVAVAENFNQLTLLVQKHSLKGDLVLAMGAGNINNLWRQLTHLDNAKRCPPSLAA.

129-135 (GSHGKTT) lines the ATP pocket.

This sequence belongs to the MurCDEF family.

Its subcellular location is the cytoplasm. It catalyses the reaction UDP-N-acetyl-alpha-D-muramate + L-alanine + ATP = UDP-N-acetyl-alpha-D-muramoyl-L-alanine + ADP + phosphate + H(+). The protein operates within cell wall biogenesis; peptidoglycan biosynthesis. Functionally, cell wall formation. The chain is UDP-N-acetylmuramate--L-alanine ligase from Prochlorococcus marinus (strain MIT 9313).